Here is a 359-residue protein sequence, read N- to C-terminus: Protein mab-21-like 2 (359 aa).

It belongs to the mab-21 family.

Its subcellular location is the nucleus. It is found in the cytoplasm. In terms of biological role, required for several aspects of embryonic development including normal development of the eye. This is Protein mab-21-like 2 (mab21l2) from Xenopus tropicalis (Western clawed frog).